The following is a 360-amino-acid chain: Isopentenyl-diphosphate delta-isomerase (360 aa).

Position 6–7 (6–7 (RK)) interacts with substrate. Residues T62, 63–65 (GMT), S93, and N122 contribute to the FMN site. A substrate-binding site is contributed by 93 to 95 (SQR). Q157 contributes to the substrate binding site. Residue E158 coordinates Mg(2+). Residues K189, S214, T219, 272 to 274 (GIR), and 293 to 294 (AL) contribute to the FMN site.

The protein belongs to the IPP isomerase type 2 family. As to quaternary structure, homooctamer. Dimer of tetramers. Requires FMN as cofactor. NADPH serves as cofactor. It depends on Mg(2+) as a cofactor.

Its subcellular location is the cytoplasm. The catalysed reaction is isopentenyl diphosphate = dimethylallyl diphosphate. Involved in the biosynthesis of isoprenoids. Catalyzes the 1,3-allylic rearrangement of the homoallylic substrate isopentenyl (IPP) to its allylic isomer, dimethylallyl diphosphate (DMAPP). This is Isopentenyl-diphosphate delta-isomerase from Ignicoccus hospitalis (strain KIN4/I / DSM 18386 / JCM 14125).